We begin with the raw amino-acid sequence, 108 residues long: Integration host factor subunit alpha (108 aa).

Belongs to the bacterial histone-like protein family. As to quaternary structure, heterodimer of an alpha and a beta chain.

Functionally, this protein is one of the two subunits of integration host factor, a specific DNA-binding protein that functions in genetic recombination as well as in transcriptional and translational control. This Methylorubrum extorquens (strain CM4 / NCIMB 13688) (Methylobacterium extorquens) protein is Integration host factor subunit alpha.